A 309-amino-acid polypeptide reads, in one-letter code: MEIQFLGTSAGQPSKSRNVSCIALKLLDELNEVWLFDVGEATQHQILKTNIRPRKVTRIFISHTHGDHIFGLPGFLSSRSFQGDGGPLTIYGPAGIEQFVQTSLRVSKTRVSYPIKYVVLKEDGLIFENDIFAVYTARLDHRVPSFGFRVVEKPRPGELLMDKVAEYNVPNGPLLGQLKAGKIITLSDGQKLDGRDFLGEERPGRIVTIIYDTRPTKNIGELADNADVLVHESTFDGGEEKMAHRYFHSTCLDAARVARDHNVGELYLTHISARYTGRAGRQLEHDARKIFKHTHLANDLDNFEITLRG.

Zn(2+) is bound by residues His-63, His-65, Asp-67, His-68, His-141, Asp-212, and His-270. Residue Asp-67 is the Proton acceptor of the active site.

The protein belongs to the RNase Z family. Homodimer. Zn(2+) serves as cofactor.

It carries out the reaction Endonucleolytic cleavage of RNA, removing extra 3' nucleotides from tRNA precursor, generating 3' termini of tRNAs. A 3'-hydroxy group is left at the tRNA terminus and a 5'-phosphoryl group is left at the trailer molecule.. Zinc phosphodiesterase, which displays some tRNA 3'-processing endonuclease activity. Probably involved in tRNA maturation, by removing a 3'-trailer from precursor tRNA. The protein is Ribonuclease Z of Lactobacillus johnsonii (strain CNCM I-12250 / La1 / NCC 533).